Here is a 134-residue protein sequence, read N- to C-terminus: uncharacterized protein (134 aa).

This is an uncharacterized protein from Human cytomegalovirus (strain AD169) (HHV-5).